Reading from the N-terminus, the 169-residue chain is Large ribosomal subunit protein uL18 (169 aa).

The protein belongs to the universal ribosomal protein uL18 family. As to quaternary structure, part of the 50S ribosomal subunit. Contacts the 5S and 23S rRNAs.

This is one of the proteins that bind and probably mediate the attachment of the 5S RNA into the large ribosomal subunit, where it forms part of the central protuberance. The chain is Large ribosomal subunit protein uL18 from Methanothrix thermoacetophila (strain DSM 6194 / JCM 14653 / NBRC 101360 / PT) (Methanosaeta thermophila).